A 215-amino-acid chain; its full sequence is MOB kinase activator-like 1A (215 aa).

Positions M1–L29 are disordered. Zn(2+) is bound by residues C80, C85, H162, and H167.

The protein belongs to the MOB1/phocein family. As to expression, isoform 1 is constitutively expressed. Isoform 2 is specifically expressed in flowers bud during sporogenesis and gametogenesis.

It localises to the cytoplasm. It is found in the cytoskeleton. The protein localises to the phragmoplast. The polypeptide is MOB kinase activator-like 1A (Medicago sativa subsp. falcata (Sickle medic)).